A 400-amino-acid chain; its full sequence is Acetate kinase (400 aa).

Asn-7 lines the Mg(2+) pocket. Lys-14 lines the ATP pocket. Arg-90 serves as a coordination point for substrate. Asp-147 (proton donor/acceptor) is an active-site residue. ATP is bound by residues 207–211 (HLGNG), 282–284 (DFR), and 331–335 (GIGEN). Position 384 (Glu-384) interacts with Mg(2+).

It belongs to the acetokinase family. As to quaternary structure, homodimer. Mg(2+) is required as a cofactor. The cofactor is Mn(2+).

It is found in the cytoplasm. It catalyses the reaction acetate + ATP = acetyl phosphate + ADP. It functions in the pathway metabolic intermediate biosynthesis; acetyl-CoA biosynthesis; acetyl-CoA from acetate: step 1/2. In terms of biological role, catalyzes the formation of acetyl phosphate from acetate and ATP. Can also catalyze the reverse reaction. This is Acetate kinase from Thermoanaerobacterium thermosaccharolyticum (strain ATCC 7956 / DSM 571 / NCIMB 9385 / NCA 3814 / NCTC 13789 / WDCM 00135 / 2032) (Clostridium thermosaccharolyticum).